A 453-amino-acid chain; its full sequence is Zinc finger protein Pegasus (453 aa).

3 consecutive C2H2-type zinc fingers follow at residues 101–123, 129–151, and 157–180; these read LKCR…IRIH, HRCH…MRSH, and YKCE…RRKH. Residues 279-293 show a composition bias toward polar residues; sequence GQLSSLPPDTQNPAS. The segment at 279–375 is disordered; it reads GQLSSLPPDT…QPSTPAPALP (97 aa). The segment covering 315 to 332 has biased composition (low complexity); it reads CSSAVSTSVAQSSSPASP. Residues 356–368 are compositionally biased toward polar residues; that stretch reads RTSTPSISNSQPS. C2H2-type zinc fingers lie at residues 383–405 and 411–438; these read HHCQ…MGCH and FQCN…CCQH.

This sequence belongs to the Ikaros C2H2-type zinc-finger protein family. Probably self-associates.

It is found in the nucleus. Transcriptional repressor that binds the core 5'GNNTGTNG-3' DNA consensus sequence. In Xenopus laevis (African clawed frog), this protein is Zinc finger protein Pegasus (ikzf5).